We begin with the raw amino-acid sequence, 116 residues long: uncharacterized protein (116 aa).

This is an uncharacterized protein from Escherichia coli (strain K12).